The following is a 115-amino-acid chain: Regulator of ribonuclease activity B (115 aa).

This sequence belongs to the RraB family. As to quaternary structure, interacts with the C-terminal region of Rne.

It localises to the cytoplasm. In terms of biological role, globally modulates RNA abundance by binding to RNase E (Rne) and regulating its endonucleolytic activity. Can modulate Rne action in a substrate-dependent manner by altering the composition of the degradosome. This chain is Regulator of ribonuclease activity B, found in Aeromonas salmonicida (strain A449).